The sequence spans 153 residues: Jacalin-related lectin Calsepa (153 aa).

Ala-2 bears the N-acetylalanine mark. One can recognise a Jacalin-type lectin domain in the interval 6–152 (DTISGPWGNN…VDAIGTYNRH (147 aa)). N-glycan binding stretches follow at residues 17-18 (GN), 95-96 (DN), and 140-144 (GYYVD).

The protein belongs to the jacalin lectin family. In terms of assembly, homodimer. Not glycosylated. As to expression, rhizome (at protein level). Detected in the cortex and the pith of rhizome. Not detected in vascular tissues, pericycle, endodermis or rhizodermis.

Its subcellular location is the cytoplasm. Hemagglutinating activity is most inhibited by methyl alpha-mannopyranoside. This activity is inhibited to a less extent (about a third of the inhibition of that of methyl alpha-mannopyranoside) by methyl alpha-glucoside, other alpha-glucosides, such as maltose, isomaltose, panose or palatinose, and alpha-glucosides modified at the second position, such as methyl 2-deoxy-alpha-arabinoglucopyranoside or methyl 2-acetamido-2-deoxy alpha-glucopyranoside. Mildly inhibited by free monosaccharides, with glucose presenting at least 20-fold less inhibitory effect on hemagglutinating activity than mannose. Glycoproteins are somewhat inhibitory, the best being asialothyroglobulin and ovomucoid. Not inhibited by isomaltitol, sucrose or trehalose. Mannose-binding lectin. Preferentially binds mannose at concentrations ranging between 5 and 25 mM, but also binds glucose. Has a marked preference for methylated sugar derivatives, such as alpha-MeMan and alpha-MeGlc, at concentration down to 5 mM. Binds to N-glycans, but not to glycolipid-type or other type of glycans. Binds N-linked high-mannose-type glycans. Has a preference for smaller (Man(2)-Man(6)) high-mannose-type glycans to larger (Man(7)-Man(9)) ones. Recognizes both alpha1-6 extended and alpha1-3 extended monoantennary glycans. The addition of alpha1-2Man to the Man-alpha1-3Man-beta branch results in a significant loss of affinity, but beta1-2GlcNAc has some affinity. Has less affinity for biantennary glycans. However, affinity is significant for the biantennary complex-type N-glycans with bisecting GlcNAc. No affinity is observed for tri- and tetra-antennary glycans. Binds bisected glycans of the mouse brain. Selectively binds to bisecting N-glycans which are in back-fold conformation, and does not favor a glycan with an extend conformation. Has hemagglutinating activity against rabbit erythrocytes at 0.3 ug/ml and against trypsin-treated human erythrocytes at 5 ug/ml. Has mitogenic activity in murine cells. The polypeptide is Jacalin-related lectin Calsepa (Calystegia sepium (Hedge bindweed)).